Consider the following 724-residue polypeptide: Catalase-peroxidase (724 aa).

Residues 98 to 226 (WHAAGSYRTA…LAAVQMGLIY (129 aa)) constitute a cross-link (tryptophyl-tyrosyl-methioninium (Trp-Tyr) (with M-252)). Catalysis depends on histidine 99, which acts as the Proton acceptor. Positions 226–252 (YVNPQGVNGEPDPLRTALHVRETFARM) form a cross-link, tryptophyl-tyrosyl-methioninium (Tyr-Met) (with W-98). Residue histidine 267 coordinates heme b.

It belongs to the peroxidase family. Peroxidase/catalase subfamily. In terms of assembly, homodimer or homotetramer. It depends on heme b as a cofactor. Post-translationally, formation of the three residue Trp-Tyr-Met cross-link is important for the catalase, but not the peroxidase activity of the enzyme.

It carries out the reaction H2O2 + AH2 = A + 2 H2O. It catalyses the reaction 2 H2O2 = O2 + 2 H2O. Bifunctional enzyme with both catalase and broad-spectrum peroxidase activity. The sequence is that of Catalase-peroxidase from Cereibacter sphaeroides (strain ATCC 17025 / ATH 2.4.3) (Rhodobacter sphaeroides).